The chain runs to 733 residues: Phosphoribosylformylglycinamidine synthase subunit PurL (733 aa).

The active site involves histidine 41. The ATP site is built by tyrosine 44 and lysine 83. Glutamate 85 contacts Mg(2+). Residues 86–89 (SHNH) and arginine 108 each bind substrate. Histidine 87 (proton acceptor) is an active-site residue. Aspartate 109 is a Mg(2+) binding site. Residues 212–232 (GASFASQELSEESEEKRPSVQ) form a disordered region. Glutamine 232 provides a ligand contact to substrate. Aspartate 260 contributes to the Mg(2+) binding site. Residue 304-306 (ESQ) participates in substrate binding. ATP contacts are provided by aspartate 488 and glycine 525. Asparagine 526 contacts Mg(2+). Serine 528 is a binding site for substrate.

Belongs to the FGAMS family. As to quaternary structure, monomer. Part of the FGAM synthase complex composed of 1 PurL, 1 PurQ and 2 PurS subunits.

It localises to the cytoplasm. The catalysed reaction is N(2)-formyl-N(1)-(5-phospho-beta-D-ribosyl)glycinamide + L-glutamine + ATP + H2O = 2-formamido-N(1)-(5-O-phospho-beta-D-ribosyl)acetamidine + L-glutamate + ADP + phosphate + H(+). The protein operates within purine metabolism; IMP biosynthesis via de novo pathway; 5-amino-1-(5-phospho-D-ribosyl)imidazole from N(2)-formyl-N(1)-(5-phospho-D-ribosyl)glycinamide: step 1/2. In terms of biological role, part of the phosphoribosylformylglycinamidine synthase complex involved in the purines biosynthetic pathway. Catalyzes the ATP-dependent conversion of formylglycinamide ribonucleotide (FGAR) and glutamine to yield formylglycinamidine ribonucleotide (FGAM) and glutamate. The FGAM synthase complex is composed of three subunits. PurQ produces an ammonia molecule by converting glutamine to glutamate. PurL transfers the ammonia molecule to FGAR to form FGAM in an ATP-dependent manner. PurS interacts with PurQ and PurL and is thought to assist in the transfer of the ammonia molecule from PurQ to PurL. This Caldanaerobacter subterraneus subsp. tengcongensis (strain DSM 15242 / JCM 11007 / NBRC 100824 / MB4) (Thermoanaerobacter tengcongensis) protein is Phosphoribosylformylglycinamidine synthase subunit PurL.